A 274-amino-acid chain; its full sequence is Orotidine 5'-phosphate decarboxylase (274 aa).

Residues Asp-40, 62-64, 93-102, Tyr-227, and Arg-245 each bind substrate; these read KTH and DRKFIDIGNT. The active-site Proton donor is the Lys-95.

Belongs to the OMP decarboxylase family.

It carries out the reaction orotidine 5'-phosphate + H(+) = UMP + CO2. It functions in the pathway pyrimidine metabolism; UMP biosynthesis via de novo pathway; UMP from orotate: step 2/2. This chain is Orotidine 5'-phosphate decarboxylase (pyrG), found in Emericella nidulans (strain FGSC A4 / ATCC 38163 / CBS 112.46 / NRRL 194 / M139) (Aspergillus nidulans).